We begin with the raw amino-acid sequence, 338 residues long: Large ribosomal subunit protein uL10 (338 aa).

Residues 303–338 (VEVSAAPAAEEEKEEEKKEEEKKEEDTGAAGLALLF) are disordered. A compositionally biased stretch (basic and acidic residues) spans 317–328 (EEKKEEEKKEED).

It belongs to the universal ribosomal protein uL10 family. Part of the 50S ribosomal subunit. Forms part of the ribosomal stalk which helps the ribosome interact with GTP-bound translation factors. Forms a heptameric L10(L12)2(L12)2(L12)2 complex, where L10 forms an elongated spine to which the L12 dimers bind in a sequential fashion.

Functionally, forms part of the ribosomal stalk, playing a central role in the interaction of the ribosome with GTP-bound translation factors. In Methanocaldococcus jannaschii (strain ATCC 43067 / DSM 2661 / JAL-1 / JCM 10045 / NBRC 100440) (Methanococcus jannaschii), this protein is Large ribosomal subunit protein uL10.